Reading from the N-terminus, the 162-residue chain is Interleukin-15 (162 aa).

An N-terminal signal peptide occupies residues 1 to 29 (MRILKPYLRSTSIQCYLCLLLNSHFLTEA). A propeptide spanning residues 30-48 (GIHVFILGCISASLPKTEA) is cleaved from the precursor. Disulfide bonds link Cys83–Cys133 and Cys90–Cys136. N-linked (GlcNAc...) asparagine glycans are attached at residues Asn104, Asn113, Asn121, and Asn127.

Belongs to the IL-15/IL-21 family.

It is found in the secreted. In terms of biological role, cytokine that plays a major role in the development of inflammatory and protective immune responses to microbial invaders and parasites by modulating immune cells of both the innate and adaptive immune systems. Stimulates the proliferation of natural killer cells, T-cells and B-cells and promotes the secretion of several cytokines. In monocytes, induces the production of IL8 and monocyte chemotactic protein 1/CCL2, two chemokines that attract neutrophils and monocytes respectively to sites of infection. Unlike most cytokines, which are secreted in soluble form, IL15 is expressed in association with its high affinity IL15RA on the surface of IL15-producing cells and delivers signals to target cells that express IL2RB and IL2RG receptor subunits. Binding to its receptor triggers the phosphorylation of JAK1 and JAK3 and the recruitment and subsequent phosphorylation of signal transducer and activator of transcription-3/STAT3 and STAT5. In mast cells, induces the rapid tyrosine phosphorylation of STAT6 and thereby controls mast cell survival and release of cytokines such as IL4. The sequence is that of Interleukin-15 (IL15) from Bos taurus (Bovine).